The following is a 546-amino-acid chain: Low-affinity methionine permease (546 aa).

At 1-70 (MEPLLFNSGK…QGRHLGVFST (70 aa)) the chain is on the extracellular side. Residues 71 to 91 (VVLFVSRIMGSGIFAVPSVIL) traverse the membrane as a helical segment. Residues 92 to 98 (LNTGGNK) lie on the Cytoplasmic side of the membrane. Residues 99–119 (LIYFAIWVFSAAIAFAGLYLF) traverse the membrane as a helical segment. The Extracellular portion of the chain corresponds to 120-148 (LEFGSWIPKSGGRKNFLERSFERPRLLIS). A helical membrane pass occupies residues 149 to 169 (VVFSCYSVLTGYALTGSIVFG). The Cytoplasmic portion of the chain corresponds to 170-188 (KYVLSAFGVTDDSWSKYVS). The helical transmembrane segment at 189–209 (ISFIIFAVLIHGVSVRHGVFI) threads the bilayer. Topologically, residues 210–213 (QNAL) are extracellular. A helical membrane pass occupies residues 214–234 (GGLKLIMIVLMCFAGLYTLFF). Residues 235 to 254 (YKSTGQVAWDLPVTQVEKDS) are Cytoplasmic-facing. A helical membrane pass occupies residues 255-275 (LLSVSSIATAFISSFFCFSGW). Residues 276–297 (DTVHTVTSEIKNPVKTLKVSGP) are Extracellular-facing. A helical membrane pass occupies residues 298–318 (LSLIICFVCYTMMNVAYLKVL). T319 is a topological domain (cytoplasmic). A helical transmembrane segment spans residues 320–340 (YEEIVSAGPLVGSVLFTKLFG). The Extracellular portion of the chain corresponds to 341–346 (PRVGGK). A helical transmembrane segment spans residues 347–367 (FIAFSIAISAASNILVVIYSI). Residues 368-393 (SRVNQEIFKEGYLPFSIHMSKNWPFD) are Cytoplasmic-facing. The chain crosses the membrane as a helical span at residues 394–414 (APLPSISLCGFITIAWILILP). Over 415-423 (KEGESFNYL) the chain is Extracellular. A helical membrane pass occupies residues 424 to 444 (VSMDGYGNQFFLLLVAIGLFI). Residues 445 to 459 (WRFKHKNEVPEIRAS) are Cytoplasmic-facing. A helical transmembrane segment spans residues 460-480 (TFGVLAIITLSLYMLMAPFFA). Residues 481-494 (DPSLNRVGFLPPYQ) lie on the Extracellular side of the membrane. A helical membrane pass occupies residues 495–515 (IMSLLVIVACFFFWLVKFVLL). The Cytoplasmic portion of the chain corresponds to 516–546 (PKFFHYKLLPKITYLHDGLIVTEWVKKPCLC).

To yeast high affinity methionine permease (MUP1).

It localises to the membrane. In terms of biological role, very low affinity permease for methionine. The protein is Low-affinity methionine permease (MUP3) of Saccharomyces cerevisiae (strain ATCC 204508 / S288c) (Baker's yeast).